The sequence spans 344 residues: 4-dimethylallyltryptophan N-methyltransferase easF (344 aa).

It belongs to the methyltransferase superfamily. In terms of assembly, homodimer.

The catalysed reaction is 4-(3-methylbut-2-enyl)-L-tryptophan + S-adenosyl-L-methionine = 4-(3-methylbut-2-enyl)-L-abrine + S-adenosyl-L-homocysteine + H(+). Its pathway is alkaloid biosynthesis; ergot alkaloid biosynthesis. 4-dimethylallyltryptophan N-methyltransferase; part of the gene cluster that mediates the biosynthesis of fungal ergot alkaloid. DmaW catalyzes the first step of ergot alkaloid biosynthesis by condensing dimethylallyl diphosphate (DMAP) and tryptophan to form 4-dimethylallyl-L-tryptophan. The second step is catalyzed by the methyltransferase easF that methylates 4-dimethylallyl-L-tryptophan in the presence of S-adenosyl-L-methionine, resulting in the formation of 4-dimethylallyl-L-abrine. The catalase easC and the FAD-dependent oxidoreductase easE then transform 4-dimethylallyl-L-abrine to chanoclavine-I which is further oxidized by easD in the presence of NAD(+), resulting in the formation of chanoclavine-I aldehyde. Agroclavine dehydrogenase easG then mediates the conversion of chanoclavine-I aldehyde to agroclavine via a non-enzymatic adduct reaction: the substrate is an iminium intermediate that is formed spontaneously from chanoclavine-I aldehyde in the presence of glutathione. The presence of easA is not required to complete this reaction. Further conversion of agroclavine to paspalic acid is a two-step process involving oxidation of agroclavine to elymoclavine and of elymoclavine to paspalic acid, the second step being performed by the elymoclavine oxidase cloA. Paspalic acid is then further converted to D-lysergic acid. Ergopeptines are assembled from D-lysergic acid and three different amino acids by the D-lysergyl-peptide-synthetases composed each of a monomudular and a trimodular nonribosomal peptide synthetase subunit. LpsB and lpsC encode the monomodular subunits responsible for D-lysergic acid activation and incorporation into the ergopeptine backbone. LpsA1 and A2 subunits encode the trimodular nonribosomal peptide synthetase assembling the tripeptide portion of ergopeptines. LpsA1 is responsible for formation of the major ergopeptine, ergotamine, and lpsA2 for alpha-ergocryptine, the minor ergopeptine of the total alkaloid mixture elaborated by C.purpurea. D-lysergyl-tripeptides are assembled by the nonribosomal peptide synthetases and released as N-(D-lysergyl-aminoacyl)-lactams. Cyclolization of the D-lysergyl-tripeptides is performed by the Fe(2+)/2-ketoglutarate-dependent dioxygenase easH which introduces a hydroxyl group into N-(D-lysergyl-aminoacyl)-lactam at alpha-C of the aminoacyl residue followed by spontaneous condensation with the terminal lactam carbonyl group. The protein is 4-dimethylallyltryptophan N-methyltransferase easF of Claviceps purpurea (strain 20.1) (Ergot fungus).